An 81-amino-acid chain; its full sequence is Cortexin-2 (81 aa).

A helical membrane pass occupies residues 29–49 (TAFAFVGMLLVFLGLLIVRCF).

This sequence belongs to the cortexin family.

Its subcellular location is the membrane. The chain is Cortexin-2 (ctxn2) from Danio rerio (Zebrafish).